The following is a 346-amino-acid chain: UDP-3-O-acylglucosamine N-acyltransferase (346 aa).

Histidine 253 (proton acceptor) is an active-site residue.

The protein belongs to the transferase hexapeptide repeat family. LpxD subfamily. Homotrimer.

The enzyme catalyses a UDP-3-O-[(3R)-3-hydroxyacyl]-alpha-D-glucosamine + a (3R)-hydroxyacyl-[ACP] = a UDP-2-N,3-O-bis[(3R)-3-hydroxyacyl]-alpha-D-glucosamine + holo-[ACP] + H(+). Its pathway is bacterial outer membrane biogenesis; LPS lipid A biosynthesis. In terms of biological role, catalyzes the N-acylation of UDP-3-O-acylglucosamine using 3-hydroxyacyl-ACP as the acyl donor. Is involved in the biosynthesis of lipid A, a phosphorylated glycolipid that anchors the lipopolysaccharide to the outer membrane of the cell. This chain is UDP-3-O-acylglucosamine N-acyltransferase, found in Rickettsia felis (strain ATCC VR-1525 / URRWXCal2) (Rickettsia azadi).